Consider the following 628-residue polypeptide: Alpha pinene synthase, chloroplastic (628 aa).

The transit peptide at 1-46 directs the protein to the chloroplast; it reads MSLGCITPLASAMVGPKLVRPLIHHNPLFHHKPLNRPYLQTKIPLR. Mg(2+) contacts are provided by Asp-381, Asp-385, and Glu-532. The DDXXD motif motif lies at 381 to 385; sequence DDMYD.

Belongs to the terpene synthase family. Tpsa subfamily. The cofactor is Mg(2+). It depends on Mn(2+) as a cofactor.

It is found in the plastid. The protein localises to the chloroplast. It catalyses the reaction (2E)-geranyl diphosphate = alpha-pinene + diphosphate. It participates in secondary metabolite biosynthesis; terpenoid biosynthesis. Its function is as follows. Monoterpene synthase involved in the biosynthesis of volatile compounds. Mediates the conversion of (2E)-geranyl diphosphate (GPP) into alpha-pinene. This Chamaecyparis formosensis (Formosan cypress) protein is Alpha pinene synthase, chloroplastic.